We begin with the raw amino-acid sequence, 512 residues long: ATP synthase subunit alpha, chloroplastic (512 aa).

170 to 177 (GDRQTGKT) is an ATP binding site.

This sequence belongs to the ATPase alpha/beta chains family. As to quaternary structure, F-type ATPases have 2 components, CF(1) - the catalytic core - and CF(0) - the membrane proton channel. CF(1) has five subunits: alpha(3), beta(3), gamma(1), delta(1), epsilon(1). CF(0) has four main subunits: a, b, b' and c.

The protein localises to the plastid. It is found in the chloroplast thylakoid membrane. The enzyme catalyses ATP + H2O + 4 H(+)(in) = ADP + phosphate + 5 H(+)(out). In terms of biological role, produces ATP from ADP in the presence of a proton gradient across the membrane. The alpha chain is a regulatory subunit. This is ATP synthase subunit alpha, chloroplastic from Staurastrum punctulatum (Green alga).